The following is a 446-amino-acid chain: Exodeoxyribonuclease 7 large subunit (446 aa).

Belongs to the XseA family. Heterooligomer composed of large and small subunits.

Its subcellular location is the cytoplasm. It catalyses the reaction Exonucleolytic cleavage in either 5'- to 3'- or 3'- to 5'-direction to yield nucleoside 5'-phosphates.. Bidirectionally degrades single-stranded DNA into large acid-insoluble oligonucleotides, which are then degraded further into small acid-soluble oligonucleotides. The chain is Exodeoxyribonuclease 7 large subunit from Streptococcus pneumoniae (strain ATCC 700669 / Spain 23F-1).